We begin with the raw amino-acid sequence, 220 residues long: 7-cyano-7-deazaguanine synthase (220 aa).

11–21 lines the ATP pocket; the sequence is VSGGMDSVTLM. Positions 186, 194, 197, and 200 each coordinate Zn(2+).

It belongs to the QueC family. Zn(2+) is required as a cofactor.

It carries out the reaction 7-carboxy-7-deazaguanine + NH4(+) + ATP = 7-cyano-7-deazaguanine + ADP + phosphate + H2O + H(+). It participates in purine metabolism; 7-cyano-7-deazaguanine biosynthesis. Functionally, catalyzes the ATP-dependent conversion of 7-carboxy-7-deazaguanine (CDG) to 7-cyano-7-deazaguanine (preQ(0)). The protein is 7-cyano-7-deazaguanine synthase of Porphyromonas gingivalis (strain ATCC 33277 / DSM 20709 / CIP 103683 / JCM 12257 / NCTC 11834 / 2561).